The following is a 337-amino-acid chain: Putative 4-hydroxythreonine-4-phosphate dehydrogenase 2 (337 aa).

Residues His-173, His-217, and His-274 each contribute to the a divalent metal cation site.

Belongs to the PdxA family. Homodimer. The cofactor is Zn(2+). Requires Mg(2+) as cofactor. Co(2+) is required as a cofactor.

It is found in the cytoplasm. It catalyses the reaction 4-(phosphooxy)-L-threonine + NAD(+) = 3-amino-2-oxopropyl phosphate + CO2 + NADH. Its pathway is cofactor biosynthesis; pyridoxine 5'-phosphate biosynthesis; pyridoxine 5'-phosphate from D-erythrose 4-phosphate: step 4/5. Its function is as follows. Catalyzes the NAD(P)-dependent oxidation of 4-(phosphooxy)-L-threonine (HTP) into 2-amino-3-oxo-4-(phosphooxy)butyric acid which spontaneously decarboxylates to form 3-amino-2-oxopropyl phosphate (AHAP). This is Putative 4-hydroxythreonine-4-phosphate dehydrogenase 2 from Pseudomonas aeruginosa (strain ATCC 15692 / DSM 22644 / CIP 104116 / JCM 14847 / LMG 12228 / 1C / PRS 101 / PAO1).